The primary structure comprises 795 residues: Delta-1-pyrroline-5-carboxylate synthase (795 aa).

Positions 1–361 (MLSQVYRYGF…FFSEVKPAGP (361 aa)) are glutamate 5-kinase. Residues Ser117, Asp223, and Asn246 each coordinate substrate. ATP is bound by residues 266–267 (SD) and 305–311 (MGGMEAK). Residues Lys311, Lys347, and Lys550 each carry the N6-succinyllysine modification. The gamma-glutamyl phosphate reductase stretch occupies residues 362–795 (TVEQQGEMAR…NLPIPQRNTN (434 aa)).

This sequence in the N-terminal section; belongs to the glutamate 5-kinase family. The protein in the C-terminal section; belongs to the gamma-glutamyl phosphate reductase family. As to quaternary structure, can form homodimers/multimers.

It localises to the mitochondrion matrix. The enzyme catalyses L-glutamate + ATP = L-glutamyl 5-phosphate + ADP. It catalyses the reaction L-glutamate 5-semialdehyde + phosphate + NADP(+) = L-glutamyl 5-phosphate + NADPH + H(+). It participates in amino-acid biosynthesis; L-proline biosynthesis; L-glutamate 5-semialdehyde from L-glutamate: step 1/2. It functions in the pathway amino-acid biosynthesis; L-proline biosynthesis; L-glutamate 5-semialdehyde from L-glutamate: step 2/2. In terms of biological role, bifunctional enzyme that converts glutamate to glutamate 5-semialdehyde, an intermediate in the biosynthesis of proline, ornithine and arginine. In Pongo abelii (Sumatran orangutan), this protein is Delta-1-pyrroline-5-carboxylate synthase (ALDH18A1).